Here is a 200-residue protein sequence, read N- to C-terminus: Potassium-transporting ATPase KdpC subunit (200 aa).

Residues 7 to 27 traverse the membrane as a helical segment; the sequence is PALVMIVLFTILTGLIYPLAM.

It belongs to the KdpC family. In terms of assembly, the system is composed of three essential subunits: KdpA, KdpB and KdpC.

It is found in the cell inner membrane. Functionally, part of the high-affinity ATP-driven potassium transport (or Kdp) system, which catalyzes the hydrolysis of ATP coupled with the electrogenic transport of potassium into the cytoplasm. This subunit acts as a catalytic chaperone that increases the ATP-binding affinity of the ATP-hydrolyzing subunit KdpB by the formation of a transient KdpB/KdpC/ATP ternary complex. In Methylocella silvestris (strain DSM 15510 / CIP 108128 / LMG 27833 / NCIMB 13906 / BL2), this protein is Potassium-transporting ATPase KdpC subunit.